Reading from the N-terminus, the 89-residue chain is Large ribosomal subunit protein uL24 (89 aa).

Belongs to the universal ribosomal protein uL24 family. As to quaternary structure, part of the 50S ribosomal subunit.

Its function is as follows. One of two assembly initiator proteins, it binds directly to the 5'-end of the 23S rRNA, where it nucleates assembly of the 50S subunit. In terms of biological role, one of the proteins that surrounds the polypeptide exit tunnel on the outside of the subunit. This Chlorobium chlorochromatii (strain CaD3) protein is Large ribosomal subunit protein uL24.